The following is an 83-amino-acid chain: Mu-theraphotoxin-Hhn2e (83 aa).

Positions 1–21 (MKASMFLALAGLVLLFVVGYA) are cleaved as a signal peptide. A propeptide spanning residues 22 to 48 (SESEEKEFPRELLSKIFAVDDFKGEER) is cleaved from the precursor. 3 disulfide bridges follow: Cys50–Cys65, Cys57–Cys70, and Cys64–Cys77. Leu81 is subject to Leucine amide.

Belongs to the neurotoxin 10 (Hwtx-1) family. 15 (Hntx-3) subfamily. As to quaternary structure, monomer. In terms of tissue distribution, expressed by the venom gland.

The protein resides in the secreted. Lethal neurotoxin. Selectively blocks tetrodotoxin-sensitive voltage-gated sodium channels (Nav). Does not affect tetrodotoxin-resistant voltage-gated sodium channels or calcium channels. The polypeptide is Mu-theraphotoxin-Hhn2e (Cyriopagopus hainanus (Chinese bird spider)).